The following is a 244-amino-acid chain: Putative ABC transporter ATP-binding protein gll0289 (244 aa).

The ABC transporter domain occupies 5-237 (LVVEELHYSY…RVLLETHGLE (233 aa)). 38-45 (GPNGSGKS) serves as a coordination point for ATP.

The protein belongs to the ABC transporter superfamily.

It localises to the cell inner membrane. In terms of biological role, probably part of an ABC transporter complex. Responsible for energy coupling to the transport system. In Gloeobacter violaceus (strain ATCC 29082 / PCC 7421), this protein is Putative ABC transporter ATP-binding protein gll0289.